Reading from the N-terminus, the 286-residue chain is MTALTESSTSKFVKINEKGFSDFQIHYNEAGNGETVIMLHGGGPGAGGWSNYYRNIGAFVEAGYRVILKDSPGFNKSDAVVMDEQRGLVNARAVKGLMDALDIDRAHLVGNSMGGATALNFALEYPDRIGKLILMGPGGLGPSMFAPMPMEGIKLLFKLYAEPSYETLKQMLQVFLYDQSLITEELLQGRWEAIQRNPEHLKNFLVSAQKAPLSTWDVSARLGEIKAKTFITWGRDDRFVPLDHGLKLVWGINDARLHVFSKCGHWAQWEHADEFNRLVIDFLRHA.

Residues 42–43, Asn-51, Asn-111, Ser-180, and Arg-190 each bind substrate; that span reads GG. The active-site Proton acceptor is the His-265. Residue Trp-266 participates in substrate binding.

The protein belongs to the AB hydrolase superfamily. BphD family. In terms of assembly, homodimer.

The enzyme catalyses 2,6-dioxo-6-phenylhexa-3-enoate + H2O = 2-oxopent-4-enoate + benzoate + H(+). Its pathway is xenobiotic degradation; biphenyl degradation; 2-hydroxy-2,4-pentadienoate and benzoate from biphenyl: step 4/4. In terms of biological role, catalyzes an unusual C-C bond hydrolysis of 2-hydroxy-6-oxo-6-phenylhexa-2,4-dienoic acid (HOPDA) to produce benzoic acid and 2-hydroxy-2,4-pentadienoic acid (HPD). The sequence is that of 2-hydroxy-6-oxo-6-phenylhexa-2,4-dienoate hydrolase from Polaromonas naphthalenivorans (strain CJ2).